Here is a 475-residue protein sequence, read N- to C-terminus: uncharacterized protein (475 aa).

This is an uncharacterized protein from Acheta domesticus (House cricket).